The chain runs to 186 residues: Alpha/beta-gliadin clone PTO-A10 (186 aa).

The interval 1–20 (PQPQPQYSQPQQPISQQQQQ) is disordered.

The protein belongs to the gliadin/glutenin family. In terms of processing, substrate of transglutaminase.

Its function is as follows. Gliadin is the major seed storage protein in wheat. The protein is Alpha/beta-gliadin clone PTO-A10 of Triticum aestivum (Wheat).